Here is a 341-residue protein sequence, read N- to C-terminus: Fructose-1,6-bisphosphatase, cytosolic (341 aa).

5 residues coordinate Mg(2+): Glu71, Glu100, Asp121, Leu123, and Asp124. Substrate-binding positions include 124-127 (DGSS), Asn215, Tyr247, Tyr267, and Lys277. Residue Glu283 coordinates Mg(2+).

The protein belongs to the FBPase class 1 family. The cofactor is Mg(2+).

The protein localises to the cytoplasm. It catalyses the reaction beta-D-fructose 1,6-bisphosphate + H2O = beta-D-fructose 6-phosphate + phosphate. The protein is Fructose-1,6-bisphosphatase, cytosolic of Spinacia oleracea (Spinach).